The sequence spans 186 residues: UPF0461 protein C5orf24 homolog (186 aa).

Over residues 60-69 (NETHLQTSTS) the composition is skewed to polar residues. The interval 60–140 (NETHLQTSTS…AAGYKVSPGR (81 aa)) is disordered. Residues 78-92 (LKKKKNLGRSGKRGR) show a composition bias toward basic residues. Positions 94 to 107 (SGTTKSAGYRTSTG) are enriched in polar residues.

Belongs to the UPF0461 family.

This Xenopus tropicalis (Western clawed frog) protein is UPF0461 protein C5orf24 homolog.